The primary structure comprises 393 residues: 8-amino-7-oxononanoate synthase (393 aa).

108 to 109 (GF) contacts pyridoxal 5'-phosphate. His133 provides a ligand contact to substrate. Pyridoxal 5'-phosphate-binding positions include Ser182, 207–210 (DDAH), and 238–241 (TLSK). Position 241 is an N6-(pyridoxal phosphate)lysine (Lys241). Thr355 contributes to the substrate binding site.

It belongs to the class-II pyridoxal-phosphate-dependent aminotransferase family. BioF subfamily. In terms of assembly, homodimer. Requires pyridoxal 5'-phosphate as cofactor.

The catalysed reaction is 6-carboxyhexanoyl-[ACP] + L-alanine + H(+) = (8S)-8-amino-7-oxononanoate + holo-[ACP] + CO2. It participates in cofactor biosynthesis; biotin biosynthesis. Catalyzes the decarboxylative condensation of pimeloyl-[acyl-carrier protein] and L-alanine to produce 8-amino-7-oxononanoate (AON), [acyl-carrier protein], and carbon dioxide. This Petrotoga mobilis (strain DSM 10674 / SJ95) protein is 8-amino-7-oxononanoate synthase.